A 349-amino-acid chain; its full sequence is Phosphoribosylformylglycinamidine cyclo-ligase (349 aa).

This sequence belongs to the AIR synthase family.

Its subcellular location is the cytoplasm. The enzyme catalyses 2-formamido-N(1)-(5-O-phospho-beta-D-ribosyl)acetamidine + ATP = 5-amino-1-(5-phospho-beta-D-ribosyl)imidazole + ADP + phosphate + H(+). Its pathway is purine metabolism; IMP biosynthesis via de novo pathway; 5-amino-1-(5-phospho-D-ribosyl)imidazole from N(2)-formyl-N(1)-(5-phospho-D-ribosyl)glycinamide: step 2/2. This Psychrobacter arcticus (strain DSM 17307 / VKM B-2377 / 273-4) protein is Phosphoribosylformylglycinamidine cyclo-ligase.